Here is a 247-residue protein sequence, read N- to C-terminus: OCIA domain-containing protein 1 (247 aa).

The region spanning 1-112 (MNGRADFREP…KKLENSPLGE (112 aa)) is the OCIA domain. Ser108, Ser116, and Ser123 each carry phosphoserine. Disordered stretches follow at residues 113–153 (ALRS…ADNI) and 167–230 (SASM…MQER). 2 stretches are compositionally biased toward polar residues: residues 136–146 (SNVSGQSSFGT) and 168–177 (ASMNESTPTG). Basic and acidic residues-rich tracts occupy residues 192 to 210 (ESPK…KNRE) and 218 to 230 (HKTD…MQER). Ser193 carries the post-translational modification Phosphoserine.

Belongs to the OCIAD1 family. As to quaternary structure, interacts with OCIAD2. Interacts with STAT3. As to expression, expressed at high levels in the brain and at lower levels in the heart, ovary, testis and kidney. Expression is strongest in embryonic stem cells and in the blood vessels.

Its subcellular location is the endosome. Its function is as follows. Maintains stem cell potency. Increases STAT3 phosphorylation and controls ERK phosphorylation. May act as a scaffold, increasing STAT3 recruitment onto endosomes. This Mus musculus (Mouse) protein is OCIA domain-containing protein 1.